Reading from the N-terminus, the 377-residue chain is Cytochrome b (377 aa).

Helical transmembrane passes span 33 to 53 (FGSL…FLAM), 77 to 98 (WLIR…YLHT), 113 to 133 (WTMG…GYVL), and 178 to 198 (FFMI…VHLL). Residues His-83 and His-97 each coordinate heme b. 2 residues coordinate heme b: His-182 and His-196. His-201 contacts a ubiquinone. Transmembrane regions (helical) follow at residues 226–246 (YKDL…SLLS), 288–308 (LGGV…PLSS), 320–340 (FNQI…WIGA), and 347–367 (FIIM…LNPM).

Belongs to the cytochrome b family. As to quaternary structure, the main subunits of complex b-c1 are: cytochrome b, cytochrome c1 and the Rieske protein. Requires heme b as cofactor.

It localises to the mitochondrion inner membrane. Its function is as follows. Component of the ubiquinol-cytochrome c reductase complex (complex III or cytochrome b-c1 complex) that is part of the mitochondrial respiratory chain. The b-c1 complex mediates electron transfer from ubiquinol to cytochrome c. Contributes to the generation of a proton gradient across the mitochondrial membrane that is then used for ATP synthesis. The protein is Cytochrome b (MT-CYB) of Tetrodontophora bielanensis (Giant springtail).